The following is a 65-amino-acid chain: Small ribosomal subunit protein bS21 (65 aa).

Positions 43 to 52 are enriched in basic and acidic residues; the sequence is EKKRVKEALA. Positions 43–65 are disordered; it reads EKKRVKEALARKRSRKKARKEQD. The segment covering 53-65 has biased composition (basic residues); that stretch reads RKRSRKKARKEQD.

Belongs to the bacterial ribosomal protein bS21 family.

This chain is Small ribosomal subunit protein bS21, found in Koribacter versatilis (strain Ellin345).